The primary structure comprises 258 residues: Imidazole glycerol phosphate synthase subunit HisF (258 aa).

Residues Asp11 and Asp130 contribute to the active site.

It belongs to the HisA/HisF family. Heterodimer of HisH and HisF.

It localises to the cytoplasm. It catalyses the reaction 5-[(5-phospho-1-deoxy-D-ribulos-1-ylimino)methylamino]-1-(5-phospho-beta-D-ribosyl)imidazole-4-carboxamide + L-glutamine = D-erythro-1-(imidazol-4-yl)glycerol 3-phosphate + 5-amino-1-(5-phospho-beta-D-ribosyl)imidazole-4-carboxamide + L-glutamate + H(+). It functions in the pathway amino-acid biosynthesis; L-histidine biosynthesis; L-histidine from 5-phospho-alpha-D-ribose 1-diphosphate: step 5/9. IGPS catalyzes the conversion of PRFAR and glutamine to IGP, AICAR and glutamate. The HisF subunit catalyzes the cyclization activity that produces IGP and AICAR from PRFAR using the ammonia provided by the HisH subunit. The protein is Imidazole glycerol phosphate synthase subunit HisF of Klebsiella pneumoniae (strain 342).